The primary structure comprises 386 residues: Patatin group M-1 (386 aa).

The first 23 residues, Met1–Ala23, serve as a signal peptide directing secretion. The 198-residue stretch at Leu32–Leu229 folds into the PNPLA domain. The short motif at Gly36–Gly41 is the GXGXXG element. The short motif at Gly75–Gly79 is the GXSXG element. Ser77 (nucleophile) is an active-site residue. Asn115 carries N-linked (GlcNAc...) asparagine glycosylation. The Proton acceptor role is filled by Asp215. The DGA/G signature appears at Asp215–Gly217.

Belongs to the patatin family. As to expression, tuber.

It localises to the vacuole. Its function is as follows. Probable lipolytic acyl hydrolase (LAH), an activity which is thought to be involved in the response of tubers to pathogens. In Solanum tuberosum (Potato), this protein is Patatin group M-1.